The sequence spans 364 residues: Bifunctional protein Rv2228c (364 aa).

The RNase H type-1 domain maps to 1 to 139; the sequence is MKVVIEADGG…MDAAAQSAAA (139 aa). Residues Asp-8, Glu-49, Asp-73, and Asp-123 each coordinate Mg(2+). His-172 (tele-phosphohistidine intermediate) is an active-site residue. Glu-246 (proton donor/acceptor; for phosphatase activity) is an active-site residue.

In the N-terminal section; belongs to the RNase H family. The protein in the C-terminal section; belongs to the histidine phosphatase superfamily. In terms of assembly, the N-terminal domain alone is monomeric in solution but associates in the crystal to form a dimer. Requires Mg(2+) as cofactor.

The enzyme catalyses Endonucleolytic cleavage to 5'-phosphomonoester.. The catalysed reaction is adenosylcob(III)alamin 5'-phosphate + H2O = adenosylcob(III)alamin + phosphate. It carries out the reaction alpha-ribazole 5'-phosphate + H2O = alpha-ribazole + phosphate. Its pathway is nucleoside biosynthesis; alpha-ribazole biosynthesis; alpha-ribazole from 5,6-dimethylbenzimidazole: step 2/2. In terms of biological role, endonuclease that displays both RNase H activity with a hybrid RNA/DNA substrate as well as double-stranded RNase activity. As the only authenticated RNase HI in M.tuberculosis, probably plays an important role in the physiology of this organism, being likely involved in bacterial replication. Its function is as follows. Catalyzes the hydrolysis of the phospho group from alpha-ribazole 5'-phosphate to form alpha-ribazole. May also catalyze the conversion of adenosylcobalamin 5'-phosphate to adenosylcobalamin (vitamin B12). Has a possible role in B12 recycling, but the primary role of the C-terminal domain of this phosphatase enzyme could be phosphate generation to help bacterial survival within the macrophage, which is a phosphate-deprived environment. In Mycobacterium tuberculosis (strain ATCC 25618 / H37Rv), this protein is Bifunctional protein Rv2228c.